The chain runs to 150 residues: Transcriptional regulator MraZ (150 aa).

SpoVT-AbrB domains follow at residues 6–52 (EFFN…PYQE) and 80–126 (AVEC…NRTK).

It belongs to the MraZ family. Forms oligomers.

It localises to the cytoplasm. The protein resides in the nucleoid. The chain is Transcriptional regulator MraZ from Syntrophotalea carbinolica (strain DSM 2380 / NBRC 103641 / GraBd1) (Pelobacter carbinolicus).